Here is a 170-residue protein sequence, read N- to C-terminus: Transcription factor E (170 aa).

Positions 1–93 constitute an HTH TFE/IIEalpha-type domain; sequence MKDVYLYIVE…TWYVNDEVIS (93 aa).

This sequence belongs to the TFE family. As to quaternary structure, monomer. Interaction with RNA polymerase subunits RpoF and RpoE is necessary for Tfe stimulatory transcription activity. Able to interact with Tbp and RNA polymerase in the absence of DNA promoter. Interacts both with the preinitiation and elongation complexes.

Its function is as follows. Transcription factor that plays a role in the activation of archaeal genes transcribed by RNA polymerase. Facilitates transcription initiation by enhancing TATA-box recognition by TATA-box-binding protein (Tbp), and transcription factor B (Tfb) and RNA polymerase recruitment. Not absolutely required for transcription in vitro, but particularly important in cases where Tbp or Tfb function is not optimal. It dynamically alters the nucleic acid-binding properties of RNA polymerases by stabilizing the initiation complex and destabilizing elongation complexes. Seems to translocate with the RNA polymerase following initiation and acts by binding to the non template strand of the transcription bubble in elongation complexes. This is Transcription factor E from Pyrobaculum calidifontis (strain DSM 21063 / JCM 11548 / VA1).